We begin with the raw amino-acid sequence, 406 residues long: 4-hydroxy-3-methylbut-2-en-1-yl diphosphate synthase (ferredoxin) (406 aa).

Cys315, Cys318, Cys349, and Glu356 together coordinate [4Fe-4S] cluster.

This sequence belongs to the IspG family. [4Fe-4S] cluster is required as a cofactor.

It catalyses the reaction (2E)-4-hydroxy-3-methylbut-2-enyl diphosphate + 2 oxidized [2Fe-2S]-[ferredoxin] + H2O = 2-C-methyl-D-erythritol 2,4-cyclic diphosphate + 2 reduced [2Fe-2S]-[ferredoxin] + H(+). The protein operates within isoprenoid biosynthesis; isopentenyl diphosphate biosynthesis via DXP pathway; isopentenyl diphosphate from 1-deoxy-D-xylulose 5-phosphate: step 5/6. Converts 2C-methyl-D-erythritol 2,4-cyclodiphosphate (ME-2,4cPP) into 1-hydroxy-2-methyl-2-(E)-butenyl 4-diphosphate. The sequence is that of 4-hydroxy-3-methylbut-2-en-1-yl diphosphate synthase (ferredoxin) from Rippkaea orientalis (strain PCC 8801 / RF-1) (Cyanothece sp. (strain PCC 8801)).